The chain runs to 281 residues: NADPH-dependent 7-cyano-7-deazaguanine reductase (281 aa).

87–89 (IES) is a substrate binding site. 89 to 90 (SK) lines the NADPH pocket. Cysteine 188 acts as the Thioimide intermediate in catalysis. The active-site Proton donor is aspartate 195. Residue 227-228 (HE) participates in substrate binding. 256–257 (RG) is a binding site for NADPH. Residues 261-281 (INPYRSTEQAKPDHNHRMARQ) form a disordered region. Positions 268–281 (EQAKPDHNHRMARQ) are enriched in basic and acidic residues.

Belongs to the GTP cyclohydrolase I family. QueF type 2 subfamily. As to quaternary structure, homodimer.

It localises to the cytoplasm. It carries out the reaction 7-aminomethyl-7-carbaguanine + 2 NADP(+) = 7-cyano-7-deazaguanine + 2 NADPH + 3 H(+). It participates in tRNA modification; tRNA-queuosine biosynthesis. Catalyzes the NADPH-dependent reduction of 7-cyano-7-deazaguanine (preQ0) to 7-aminomethyl-7-deazaguanine (preQ1). This is NADPH-dependent 7-cyano-7-deazaguanine reductase from Vibrio vulnificus (strain YJ016).